The sequence spans 226 residues: RLA class II histocompatibility antigen, DP alpha-1 chain (226 aa).

Over 1–189 the chain is Extracellular; it reads EHVSVFVIFA…PIQMPETTET (189 aa). Asparagine 75 and asparagine 115 each carry an N-linked (GlcNAc...) asparagine glycan. Residues 84–176 enclose the Ig-like C1-type domain; it reads PEVIVFPKEP…LDAPLLTHWE (93 aa). The cysteines at positions 104 and 160 are disulfide-linked. The helical transmembrane segment at 190–210 threads the bilayer; that stretch reads VVCALGLVVGLAGVVVGIVLI. The Cytoplasmic segment spans residues 211–226; that stretch reads TKALRSSPDPRARRPL.

It belongs to the MHC class II family.

The protein localises to the membrane. This is RLA class II histocompatibility antigen, DP alpha-1 chain from Oryctolagus cuniculus (Rabbit).